A 192-amino-acid chain; its full sequence is Thymidylate kinase (192 aa).

7–14 (GVDGVGKS) is a binding site for ATP.

Belongs to the thymidylate kinase family.

It catalyses the reaction dTMP + ATP = dTDP + ADP. Its function is as follows. Phosphorylation of dTMP to form dTDP in both de novo and salvage pathways of dTTP synthesis. The polypeptide is Thymidylate kinase (Campylobacter fetus subsp. fetus (strain 82-40)).